The chain runs to 484 residues: Probable receptor-like protein kinase At5g18500 (484 aa).

A helical transmembrane segment spans residues 21–41 (IIVIVLSAIFVVVLAISLWLT). The segment at 72–135 (RVDEVSSSNG…SVSSANPLTA (64 aa)) is disordered. The segment covering 91–105 (KFGDKEPEKGIKAES) has biased composition (basic and acidic residues). Residues 125–134 (SSVSSANPLT) show a composition bias toward polar residues. T155 carries the post-translational modification Phosphothreonine. The 280-residue stretch at 166 to 445 (FSRDNIIGDG…MLESEEYPIA (280 aa)) folds into the Protein kinase domain. ATP is bound by residues 172 to 180 (IGDGGYGVV) and K194. A Phosphotyrosine modification is found at Y239. D292 serves as the catalytic Proton acceptor. A Phosphoserine modification is found at S296. Residues T326 and T331 each carry the phosphothreonine modification. Y339 bears the Phosphotyrosine mark. A disordered region spans residues 425 to 484 (EKRPRMSQVARMLESEEYPIAREDRRRRRSQNGTTRDSDPPRNSTDTDKSEYHDLKPEGG). Residues 460–484 (RDSDPPRNSTDTDKSEYHDLKPEGG) show a composition bias toward basic and acidic residues.

It belongs to the protein kinase superfamily. Ser/Thr protein kinase family.

It localises to the cell membrane. It carries out the reaction L-seryl-[protein] + ATP = O-phospho-L-seryl-[protein] + ADP + H(+). The catalysed reaction is L-threonyl-[protein] + ATP = O-phospho-L-threonyl-[protein] + ADP + H(+). The polypeptide is Probable receptor-like protein kinase At5g18500 (Arabidopsis thaliana (Mouse-ear cress)).